The chain runs to 256 residues: MLRIADKTFDSHLFTGTGKFASSQLMVEAIRASGSQLVTLAMKRVDLRQHNDAILEPLIAAGVTLLPNTSGAKTAEEAIFAAHLAREALGTNWLKLEIHPDARWLLPDPIETLKAAETLVQQGFVVLPYCGADPVLCKRLEEVGCAAVMPLGAPIGSNQGLETRAMLEIIIQQATVPVVVDAGIGVPSHAAQALEMGADAVLVNTAIAVADDPVNMAKAFRLAVEAGLLAPQSGPGSRSYFAHATSPLTGFLEASV.

Lysine 95 functions as the Schiff-base intermediate with DXP in the catalytic mechanism. Residues glycine 156, 182–183, and 204–205 contribute to the 1-deoxy-D-xylulose 5-phosphate site; these read AG and NT.

The protein belongs to the ThiG family. Homotetramer. Forms heterodimers with either ThiH or ThiS.

It is found in the cytoplasm. The catalysed reaction is [ThiS sulfur-carrier protein]-C-terminal-Gly-aminoethanethioate + 2-iminoacetate + 1-deoxy-D-xylulose 5-phosphate = [ThiS sulfur-carrier protein]-C-terminal Gly-Gly + 2-[(2R,5Z)-2-carboxy-4-methylthiazol-5(2H)-ylidene]ethyl phosphate + 2 H2O + H(+). It participates in cofactor biosynthesis; thiamine diphosphate biosynthesis. Functionally, catalyzes the rearrangement of 1-deoxy-D-xylulose 5-phosphate (DXP) to produce the thiazole phosphate moiety of thiamine. Sulfur is provided by the thiocarboxylate moiety of the carrier protein ThiS. In vitro, sulfur can be provided by H(2)S. The protein is Thiazole synthase of Escherichia coli O157:H7.